The sequence spans 435 residues: Prenyltransferase nanD (435 aa).

Position 101 (E101) interacts with substrate. 3 residues coordinate dimethylallyl diphosphate: R114, K202, and Y204. Y206 is a binding site for substrate. Dimethylallyl diphosphate contacts are provided by K280, Y282, Y364, Y429, and Y433.

This sequence belongs to the tryptophan dimethylallyltransferase family.

Its pathway is secondary metabolite biosynthesis. Prenyltransferase; part of the gene cluster that mediates the biosynthesis of the benzazepine alkaloid nanangelenin A which contains an unprecedented 3,4-dihydro-1-benzazepine-2,5-dione-N-prenyl-N-acetoxy-anthranilamide scaffold. The first step of nanangelenin biosynthesis is catalyzed by the indoleamine 2,3-dioxygenase nanC which produces N-formyl-kynurenine through the catabolism of tryptophan. The two-module NRPS nanA then utilizes anthranilate (Ant) and L-kynurenine (L-Kyn) to assemble the dipeptide product nanangelenin B. The first adenylation domain of nanA (A1) loads anthranilate onto the T1 domain, while A2 loads kynurenine, generated through spontaneous nonenzymatic deformylation of the nanC-supplied N-formyl-kynurenine. The peptide bond formation between the tethered amino acids is catalyzed by the first condensation domain (C1) between anthranilate's carbonyl carbon and kynurenine's aliphatic primary amine. The second C domain (C2) catalyzes the final cyclization event between the aromatic amine of kynurenine and the tethered carbonyl carbon, yielding nanangelenin B. The terminal T3 domain enhances the catalytic efficiency of C2, suggesting the T2-tethered Ant-L-Kyn is transferred to T3 prior to cyclization by C2. Once released from nanA, nanangelenin B is then prenylated by the prenyltransferase nanD to form nanangelenin C. Nanangelenin C is then N-hydroxylated by the FAD-dependent monooxygenase nanF and further acetylated by the acetyltransferase nanB to yield nanangelenin F. Finally, the N-methyltransferase nanE methylates the amide nitrogen of 1-benzazepine to convert nanangelenin F into nanangelenin A. NanE is also able to methylate most of the intermediates of the pathway such as nanangelenin B and nanangelenin C to produce nanangelenin D and nanangelenin E, respectively. This Aspergillus nanangensis protein is Prenyltransferase nanD.